A 281-amino-acid polypeptide reads, in one-letter code: Protein ZAR1-like 1.L (281 aa).

The 3CxxC-type zinc finger occupies 183–267; the sequence is QKYGFFHCKN…QELCGRCKGQ (85 aa).

This sequence belongs to the ZAR1 family. In terms of assembly, component of a cytoplasmic ribonucleoprotein complex together with eif4enif1/4E-T and cpeb1. In terms of tissue distribution, expressed in oocytes.

It is found in the cytoplasm. It localises to the cytoplasmic ribonucleoprotein granule. MRNA-binding protein required for maternal mRNA storage, translation and degradation during oocyte maturation. Controls timing of meiosis during oogenesis. Probably promotes formation of some phase-separated membraneless compartment that stores maternal mRNAs in oocytes: acts by undergoing liquid-liquid phase separation upon binding to maternal mRNAs. Binds to the 3'-UTR of maternal mRNAs, inhibiting their translation. In Xenopus laevis (African clawed frog), this protein is Protein ZAR1-like 1.L.